The sequence spans 196 residues: MGRKKLEIKRIENKSSRQVTFSKRRNGLIEKARQLSVLCDASVALLVVSASGKLYSFSSGDNLVKILDRYGKQHADDLKALDHQSKALNYGSHYELLELVDSKLVGSNVKNVSIDALVQLEEHLETALSVTRAKKTELMLKLVENLKEKEKMLKEENQVLASQMENNHHVGAEAEMEMSPAGQISDNLPVTLPLLN.

One can recognise an MADS-box domain in the interval 1–61 (MGRKKLEIKR…GKLYSFSSGD (61 aa)). Positions 8–15 (IKRIENKS) match the Nuclear localization signal motif. Residues 80 to 170 (ALDHQSKALN…ASQMENNHHV (91 aa)) enclose the K-box domain.

In terms of tissue distribution, high expression in the vegetative apex and in root tissue and lower expression in leaves and stems. Not detected in young tissues of the inflorescence. Before fertilization, expressed in ovules, but not in pollen or stamens, of non-vernalized plants. After vernalization, not detected in ovules.

Its subcellular location is the nucleus. Its function is as follows. Putative transcription factor that seems to play a central role in the regulation of flowering time in the late-flowering phenotype by interacting with 'FRIGIDA', the autonomous and the vernalization flowering pathways. Inhibits flowering by repressing 'SUPPRESSOR OF OVEREXPRESSION OF CONSTANS 1'. At elevated temperatures (e.g. 29 degrees Celsius), maintained at high levels in a JMJ30/JMJ32-dependent manner to prevent extreme precocious flowering. This chain is MADS-box protein FLOWERING LOCUS C, found in Arabidopsis thaliana (Mouse-ear cress).